Consider the following 146-residue polypeptide: ATP synthase epsilon chain (146 aa).

This sequence belongs to the ATPase epsilon chain family. As to quaternary structure, F-type ATPases have 2 components, CF(1) - the catalytic core - and CF(0) - the membrane proton channel. CF(1) has five subunits: alpha(3), beta(3), gamma(1), delta(1), epsilon(1). CF(0) has three main subunits: a, b and c.

The protein resides in the cell membrane. Functionally, produces ATP from ADP in the presence of a proton gradient across the membrane. The chain is ATP synthase epsilon chain from Lactobacillus helveticus (strain DPC 4571).